The sequence spans 275 residues: Undecaprenyl-diphosphatase 2 (275 aa).

Transmembrane regions (helical) follow at residues 48–68, 90–110, 117–137, 154–174, 195–215, 223–243, and 254–274; these read NAYVFKIVIQLGSILAVALLF, GLTLGKVAVGLLPAAVLGLLF, IFHVRTVAFALIAGAFLMIAA, ISYKQALAIGLFQCLALWPGF, ANFTFIMAIPIMVGASALSLI, ISLLPFYATGFISAFLVSLVV, and IKLVPFALYRIALGLLLLFLF.

The protein belongs to the UppP family.

The protein localises to the cell membrane. It carries out the reaction di-trans,octa-cis-undecaprenyl diphosphate + H2O = di-trans,octa-cis-undecaprenyl phosphate + phosphate + H(+). Catalyzes the dephosphorylation of undecaprenyl diphosphate (UPP). Confers resistance to bacitracin. The sequence is that of Undecaprenyl-diphosphatase 2 from Shouchella clausii (strain KSM-K16) (Alkalihalobacillus clausii).